We begin with the raw amino-acid sequence, 312 residues long: MTIKRKKVSVIGAGFTGATTAFLLAQKELADVVLVDIPQLENPTKGKALDMLEASPVQGFDANIIGTSDYADTADSDVVVITAGIARKPGMSRDDLVATNSKIMKSITRDIAKHSPNAIIVVLTNPVDAMTYSVFKEAGFPKERVIGQSGVLDTARFRTFIAQELNLSVKDITGFVLGGHGDDMVPLVRYSYAGGIPLETLIPKERLEAIVERTRKGGGEIVGLLGNGSAYYAPAASLVEMTEAILKDQRRVLPAIAYLEGEYGYSDLYLGVPVILGGNGIEKIIELELLADEKEALDRSVESVRNVMKVLV.

NAD(+) contacts are provided by residues 12-17 (GAGFTG) and aspartate 36. Arginine 87 and arginine 93 together coordinate substrate. NAD(+) contacts are provided by residues asparagine 100 and 123–125 (LTN). Substrate is bound at residue asparagine 125. Serine 149 carries the post-translational modification Phosphoserine. Position 156 (arginine 156) interacts with substrate. The active-site Proton acceptor is the histidine 180.

It belongs to the LDH/MDH superfamily. MDH type 3 family.

The catalysed reaction is (S)-malate + NAD(+) = oxaloacetate + NADH + H(+). Its function is as follows. Catalyzes the reversible oxidation of malate to oxaloacetate. In Bacillus anthracis (strain A0248), this protein is Malate dehydrogenase.